We begin with the raw amino-acid sequence, 1083 residues long: uncharacterized protein (1083 aa).

Positions 93–145 (SKGNLRYVPTTSRNPSNTDTYSSSIDISSSSSSINTSDDSSGKTSSNDLSDMS) are disordered. Residues 108-145 (SNTDTYSSSIDISSSSSSINTSDDSSGKTSSNDLSDMS) are compositionally biased toward low complexity.

Its subcellular location is the virion. This is an uncharacterized protein from Acanthamoeba polyphaga (Amoeba).